The chain runs to 156 residues: Snaclec subunit B (156 aa).

An N-terminal signal peptide occupies residues Met-1–Ala-23. Cystine bridges form between Cys-25-Cys-36, Cys-53-Cys-144, and Cys-119-Cys-136. Residues Tyr-32–Lys-145 enclose the C-type lectin domain.

The protein belongs to the snaclec family. Heterodimer of subunits A and B; disulfide-linked. As to expression, expressed by the venom gland.

Its subcellular location is the secreted. Interferes with one step of hemostasis (modulation of platelet aggregation, or coagulation cascade, for example). The polypeptide is Snaclec subunit B (Philodryas olfersii (Green snake)).